A 348-amino-acid polypeptide reads, in one-letter code: TEGPYFYVPMVNTTGIVRSPYEYPQYYLVNPAAFAILGAYMFFLIIVGFPVNFMTLYVTLEHKKLRTPLNYILLNLAVADLFMVIGGFTTTMYTSMHGYFVLGRLGCNLEGFFATLGGMISLWSLAVLAIERWVVVCKPISNFRFGENHAIMGVSLTWGMALACTVPPLVGWSRYIPEGMQCSCGIDYYTRAEGFNNETFVLYMFCCHFTVPLTIIFFCYGRLLCAVKEAAAAQQESETTQRAEREVTRMVVIMVIGFLVCWLPYASVAWFVFTHQGSEFGPLFMTIPAFFAKSSAIYNPMIYICMNKQFRHCMITTLFCGKNPFEGEEEGASSTKTEASSASSVSPA.

The Extracellular segment spans residues 1-33 (TEGPYFYVPMVNTTGIVRSPYEYPQYYLVNPAA). Asn12 carries N-linked (GlcNAc...) asparagine glycosylation. Residues 34–58 (FAILGAYMFFLIIVGFPVNFMTLYV) traverse the membrane as a helical segment. The Cytoplasmic portion of the chain corresponds to 59 to 70 (TLEHKKLRTPLN). Residues 71–93 (YILLNLAVADLFMVIGGFTTTMY) form a helical membrane-spanning segment. Residues 94–107 (TSMHGYFVLGRLGC) are Extracellular-facing. Cys107 and Cys184 form a disulfide bridge. Residues 108–130 (NLEGFFATLGGMISLWSLAVLAI) traverse the membrane as a helical segment. The short motif at 131–133 (ERW) is the 'Ionic lock' involved in activated form stabilization element. The Cytoplasmic segment spans residues 131-149 (ERWVVVCKPISNFRFGENH). Residues 150 to 170 (AIMGVSLTWGMALACTVPPLV) form a helical membrane-spanning segment. At 171–199 (GWSRYIPEGMQCSCGIDYYTRAEGFNNET) the chain is on the extracellular side. Asn197 is a glycosylation site (N-linked (GlcNAc...) asparagine). The helical transmembrane segment at 200–221 (FVLYMFCCHFTVPLTIIFFCYG) threads the bilayer. Residues 222–249 (RLLCAVKEAAAAQQESETTQRAEREVTR) are Cytoplasmic-facing. A helical transmembrane segment spans residues 250 to 271 (MVVIMVIGFLVCWLPYASVAWF). Residues 272–283 (VFTHQGSEFGPL) are Extracellular-facing. Residues 284–305 (FMTIPAFFAKSSAIYNPMIYIC) traverse the membrane as a helical segment. At Lys293 the chain carries N6-(retinylidene)lysine. The Cytoplasmic segment spans residues 306-348 (MNKQFRHCMITTLFCGKNPFEGEEEGASSTKTEASSASSVSPA). Cys320 is lipidated: S-palmitoyl cysteine. The interval 327–348 (GEEEGASSTKTEASSASSVSPA) is disordered. Positions 332-348 (ASSTKTEASSASSVSPA) are enriched in low complexity.

This sequence belongs to the G-protein coupled receptor 1 family. Opsin subfamily. Post-translationally, phosphorylated on some or all of the serine and threonine residues present in the C-terminal region. In terms of processing, contains one covalently linked retinal chromophore.

The protein resides in the membrane. The protein localises to the cell projection. It is found in the cilium. Its subcellular location is the photoreceptor outer segment. Functionally, photoreceptor required for image-forming vision at low light intensity. While most salt water fish species use retinal as chromophore, most freshwater fish use 3-dehydroretinal, or a mixture of retinal and 3-dehydroretinal. Light-induced isomerization of 11-cis to all-trans retinal triggers a conformational change that activates signaling via G-proteins. Subsequent receptor phosphorylation mediates displacement of the bound G-protein alpha subunit by arrestin and terminates signaling. The protein is Rhodopsin (rho) of Sargocentron xantherythrum (Hawaiian squirrelfish).